We begin with the raw amino-acid sequence, 86 residues long: YcgL domain-containing protein IL1825 (86 aa).

Residues 1 to 85 (MLCDVYRSSK…KREELQVNVN (85 aa)) form the YcgL domain.

This chain is YcgL domain-containing protein IL1825, found in Idiomarina loihiensis (strain ATCC BAA-735 / DSM 15497 / L2-TR).